Consider the following 295-residue polypeptide: MDAKIMITSPTTWPSPAKLNLFLYINGRTDNGYHELQTLFQFLDHGDQLTITVNDSGHITLTPDIVDLPVEQNLIWKAANALKKKTGCTLGANIHLNKILPMGGGIGGGSSNAATALVALNFLWQLGLSDDELADIGLKLGADVPVFVRGHAAFAEGVGEKLTPAQPEEKWYLVVRPDVHIATVDIFTHPDLTRNTPKRSLETLLDSEYGNDCEKIVRMIHPKVDKQLSWLLQYAPSRLTGTGSCVFAEFNSRSEAESILAQLSDNVSAFVAQGRNISPLKETLADYLSAQNRPI.

Lys-18 is a catalytic residue. Residue 101–111 participates in ATP binding; that stretch reads PMGGGIGGGSS. Asp-143 is an active-site residue.

Belongs to the GHMP kinase family. IspE subfamily.

It carries out the reaction 4-CDP-2-C-methyl-D-erythritol + ATP = 4-CDP-2-C-methyl-D-erythritol 2-phosphate + ADP + H(+). It participates in isoprenoid biosynthesis; isopentenyl diphosphate biosynthesis via DXP pathway; isopentenyl diphosphate from 1-deoxy-D-xylulose 5-phosphate: step 3/6. Functionally, catalyzes the phosphorylation of the position 2 hydroxy group of 4-diphosphocytidyl-2C-methyl-D-erythritol. The sequence is that of 4-diphosphocytidyl-2-C-methyl-D-erythritol kinase from Vibrio vulnificus (strain YJ016).